The following is a 245-amino-acid chain: Acetylglutamate kinase (245 aa).

Residues 41 to 42 (GG), Arg-63, and Asn-156 contribute to the substrate site.

Belongs to the acetylglutamate kinase family. ArgB subfamily.

It is found in the cytoplasm. The catalysed reaction is N-acetyl-L-glutamate + ATP = N-acetyl-L-glutamyl 5-phosphate + ADP. It participates in amino-acid biosynthesis; L-arginine biosynthesis; N(2)-acetyl-L-ornithine from L-glutamate: step 2/4. Functionally, catalyzes the ATP-dependent phosphorylation of N-acetyl-L-glutamate. This is Acetylglutamate kinase from Streptococcus sanguinis (strain SK36).